Consider the following 239-residue polypeptide: Pentatricopeptide repeat-containing protein DWY1, chloroplastic (239 aa).

Residues 1–35 constitute a chloroplast transit peptide; it reads MALEAAFSMSFCSFSVPKAIFCERETSSFQRITSR. Disordered regions lie at residues 40-59 and 101-122; these read AGESQVQSSDGVETQVKETS and HISPSSHSTKVRGDKPEISGGE. The span at 111–122 shows a compositional bias: basic and acidic residues; it reads VRGDKPEISGGE. The type E(+) motif stretch occupies residues 113 to 144; that stretch reads GDKPEISGGEKKAIVDRSKAYVKLKSLGKEVR. Positions 145-239 are type DYW motif; it reads DAGYVPETKY…DGNCSCGDYW (95 aa).

Belongs to the PPR family. PCMP-H subfamily. As to quaternary structure, interacts with CRR4. The cofactor is Zn(2+).

It is found in the plastid. The protein resides in the chloroplast. Plays a major role in single RNA editing events in chloroplasts. Acts as a site-recognition transacting factor involved in the edition of the site 1 of ndhD (ndhD-1 site corresponding to cytidine-2), which is a plastid-encoded subunit of the NADH-plastoquinone oxidoreductase. The interaction with CRR4 is required for its function in editing the ndhD-1 site. This is Pentatricopeptide repeat-containing protein DWY1, chloroplastic from Arabidopsis thaliana (Mouse-ear cress).